We begin with the raw amino-acid sequence, 146 residues long: Transcriptional regulator MraZ (146 aa).

SpoVT-AbrB domains lie at 9-55 (TSAL…PRPV) and 81-124 (AMDV…DAQR).

Belongs to the MraZ family. Forms oligomers.

It is found in the cytoplasm. Its subcellular location is the nucleoid. This is Transcriptional regulator MraZ from Leptothrix cholodnii (strain ATCC 51168 / LMG 8142 / SP-6) (Leptothrix discophora (strain SP-6)).